The sequence spans 405 residues: Phosphoglycerate kinase (405 aa).

Substrate-binding positions include 23–25, arginine 39, 62–65, arginine 121, and arginine 154; these read DFN and HLGR. ATP is bound by residues lysine 207, glycine 298, glutamate 329, and 355 to 358; that span reads GGDT.

This sequence belongs to the phosphoglycerate kinase family. In terms of assembly, monomer.

It localises to the cytoplasm. The enzyme catalyses (2R)-3-phosphoglycerate + ATP = (2R)-3-phospho-glyceroyl phosphate + ADP. It functions in the pathway carbohydrate degradation; glycolysis; pyruvate from D-glyceraldehyde 3-phosphate: step 2/5. The sequence is that of Phosphoglycerate kinase from Campylobacter hominis (strain ATCC BAA-381 / DSM 21671 / CCUG 45161 / LMG 19568 / NCTC 13146 / CH001A).